Here is a 414-residue protein sequence, read N- to C-terminus: MFDTVCTLPLSADLFSQALHPKEPIVSVGLSTGHVQTFRLPSEESDTDGDGAESTSSSRNGKGHIDTMWRTRRHKGSCRCLGFGVDGEMLYSAGTDGLVKAAKAETGVVENKIAIPPAKDGSVDAPTIVHALSPQTLLLATDSSALHLYDLRIPFSPVSARPQQTHHPHDDYISSLTPLPPSDTSTSGFSKQWVTTGGTTLAVTDLRRGVLVRSEDQEEELVSSVYIGGLRASGTSRGEKVVVGGSSGVLTLWEKGAWDDQDERIYVQREAGGGESLETLAVVPDELGKGKMIAVGLGSGGVKFVRMGMNKVVSEVMHDETEGVIGLGFDVEGRMVSGGGQVVKVWHEAVDSDGMDGDMAGGKRMFGSDSDDSDDGDDSDDSDRESRKAAQPQRKKKKNKGKGGQDIMGFADID.

5 WD repeats span residues 9 to 48 (PLSA…SDTD), 73 to 112 (RHKG…VENK), 118 to 159 (AKDG…SPVS), 222 to 263 (VSSV…DQDE), and 319 to 356 (DETE…DGMD). Residues 39 to 65 (RLPSEESDTDGDGAESTSSSRNGKGHI) form a disordered region. A disordered region spans residues 352-414 (SDGMDGDMAG…QDIMGFADID (63 aa)). Acidic residues predominate over residues 369–383 (DSDDSDDGDDSDDSD).

Belongs to the WD repeat WDR55 family.

Its subcellular location is the nucleus. It localises to the nucleolus. This chain is WD repeat-containing protein jip5 (jip5), found in Neosartorya fischeri (strain ATCC 1020 / DSM 3700 / CBS 544.65 / FGSC A1164 / JCM 1740 / NRRL 181 / WB 181) (Aspergillus fischerianus).